We begin with the raw amino-acid sequence, 753 residues long: 5-methyltetrahydropteroyltriglutamate--homocysteine methyltransferase (753 aa).

5-methyltetrahydropteroyltri-L-glutamate is bound by residues 17-20 (RELK) and Lys-117. L-homocysteine contacts are provided by residues 431–433 (IGS) and Glu-484. L-methionine is bound by residues 431–433 (IGS) and Glu-484. 5-methyltetrahydropteroyltri-L-glutamate contacts are provided by residues 515–516 (RC) and Trp-561. Asp-599 is a binding site for L-homocysteine. Asp-599 contacts L-methionine. Glu-605 provides a ligand contact to 5-methyltetrahydropteroyltri-L-glutamate. Zn(2+) contacts are provided by His-641, Cys-643, and Glu-665. His-694 (proton donor) is an active-site residue. Cys-726 contributes to the Zn(2+) binding site.

This sequence belongs to the vitamin-B12 independent methionine synthase family. The cofactor is Zn(2+).

The enzyme catalyses 5-methyltetrahydropteroyltri-L-glutamate + L-homocysteine = tetrahydropteroyltri-L-glutamate + L-methionine. The protein operates within amino-acid biosynthesis; L-methionine biosynthesis via de novo pathway; L-methionine from L-homocysteine (MetE route): step 1/1. Its function is as follows. Catalyzes the transfer of a methyl group from 5-methyltetrahydrofolate to homocysteine resulting in methionine formation. This is 5-methyltetrahydropteroyltriglutamate--homocysteine methyltransferase from Escherichia coli O157:H7.